A 175-amino-acid polypeptide reads, in one-letter code: Large ribosomal subunit protein uL10 (175 aa).

Belongs to the universal ribosomal protein uL10 family. As to quaternary structure, part of the ribosomal stalk of the 50S ribosomal subunit. The N-terminus interacts with L11 and the large rRNA to form the base of the stalk. The C-terminus forms an elongated spine to which L12 dimers bind in a sequential fashion forming a multimeric L10(L12)X complex.

Functionally, forms part of the ribosomal stalk, playing a central role in the interaction of the ribosome with GTP-bound translation factors. The sequence is that of Large ribosomal subunit protein uL10 from Cyanothece sp. (strain PCC 7425 / ATCC 29141).